The primary structure comprises 279 residues: MKKMVNIGFIKMGNLGMSQVINLIQDEIAAREGITVRVFGTGAKMAPADAADTESFKQWNADFVVIISPNAAAPGPTAAREIWKDVPCIIVSDGPTKKEAREAFEQEGFGYIILPVDPLIGAKREFLDSVEMASFNADAMKVLSICGVVRLIQEELDKVTEQVASGKSGKDLELPHIFAKPEKCVEHAGFANPYAKSKALAALHMAEKVAQVNFPACFMLKEIEQVCLTAAAGHEIMGAAAQLANQAREIEKSNDTVSRMPHAKNGAVLKKVRLYEKPE.

It belongs to the MTD family.

The enzyme catalyses 5,10-methylenetetrahydromethanopterin + oxidized coenzyme F420-(gamma-L-Glu)(n) + 2 H(+) = 5,10-methenyl-5,6,7,8-tetrahydromethanopterin + reduced coenzyme F420-(gamma-L-Glu)(n). It participates in one-carbon metabolism; methanogenesis from CO(2); 5,10-methylene-5,6,7,8-tetrahydromethanopterin from 5,10-methenyl-5,6,7,8-tetrahydromethanopterin (coenzyme F420 route): step 1/1. Catalyzes the reversible reduction of methenyl-H(4)MPT(+) to methylene-H(4)MPT. The sequence is that of F420-dependent methylenetetrahydromethanopterin dehydrogenase (mtd) from Methanosarcina mazei (strain ATCC BAA-159 / DSM 3647 / Goe1 / Go1 / JCM 11833 / OCM 88) (Methanosarcina frisia).